Consider the following 365-residue polypeptide: Alanine racemase (365 aa).

Lys-32 acts as the Proton acceptor; specific for D-alanine in catalysis. Position 32 is an N6-(pyridoxal phosphate)lysine (Lys-32). Arg-128 provides a ligand contact to substrate. Tyr-257 acts as the Proton acceptor; specific for L-alanine in catalysis. Met-305 is a substrate binding site.

The protein belongs to the alanine racemase family. It depends on pyridoxal 5'-phosphate as a cofactor.

The catalysed reaction is L-alanine = D-alanine. The protein operates within amino-acid biosynthesis; D-alanine biosynthesis; D-alanine from L-alanine: step 1/1. Catalyzes the interconversion of L-alanine and D-alanine. May also act on other amino acids. The polypeptide is Alanine racemase (alr) (Francisella tularensis subsp. mediasiatica (strain FSC147)).